The sequence spans 359 residues: Outer membrane protein assembly factor BamC (359 aa).

Residues 1–34 (MASLFDKNSFQMTRLQKTAVAKVVGVSLIMLLAA) form the signal peptide. The N-palmitoyl cysteine moiety is linked to residue Cys35. The S-diacylglycerol cysteine moiety is linked to residue Cys35.

This sequence belongs to the BamC family. As to quaternary structure, part of the Bam complex, which is composed of the outer membrane protein BamA, and four lipoproteins BamB, BamC, BamD and BamE.

The protein localises to the cell outer membrane. Its function is as follows. Part of the outer membrane protein assembly complex, which is involved in assembly and insertion of beta-barrel proteins into the outer membrane. This is Outer membrane protein assembly factor BamC from Rahnella sp. (strain Y9602).